Reading from the N-terminus, the 218-residue chain is MPGVVFDLDGTLVHSAPDIHAAVNKALAEEGGAPFTLAEITGFIGNGVPVLIQRVLAARGEAPDAHRQAELQGRFMAHYEADPATLTSVYPGAEAAIRHLRAEGWRIGLCTNKPVGASRQILSLFGLLELFDAIIGGESLPQRKPDPAPLRATAAALNEEVVLYVGDSEVDAATAEAAGLRFALFTEGYRHAPVHELPHHGLFSHHDELQDLLRRLLA.

The Nucleophile role is filled by Asp-7. Mg(2+) contacts are provided by Asp-7, Asp-9, and Asp-167.

This sequence belongs to the HAD-like hydrolase superfamily. CbbY/CbbZ/Gph/YieH family. Requires Mg(2+) as cofactor.

The catalysed reaction is 2-phosphoglycolate + H2O = glycolate + phosphate. It participates in organic acid metabolism; glycolate biosynthesis; glycolate from 2-phosphoglycolate: step 1/1. Its function is as follows. Specifically catalyzes the dephosphorylation of 2-phosphoglycolate. Is involved in the dissimilation of the intracellular 2-phosphoglycolate formed during the DNA repair of 3'-phosphoglycolate ends, a major class of DNA lesions induced by oxidative stress. The protein is Phosphoglycolate phosphatase of Cereibacter sphaeroides (Rhodobacter sphaeroides).